We begin with the raw amino-acid sequence, 496 residues long: Lysine--tRNA ligase (496 aa).

Residues Glu-409 and Glu-416 each coordinate Mg(2+).

The protein belongs to the class-II aminoacyl-tRNA synthetase family. As to quaternary structure, homodimer. Mg(2+) is required as a cofactor.

The protein localises to the cytoplasm. It catalyses the reaction tRNA(Lys) + L-lysine + ATP = L-lysyl-tRNA(Lys) + AMP + diphosphate. This Streptococcus suis (strain 05ZYH33) protein is Lysine--tRNA ligase.